The chain runs to 355 residues: Uroporphyrinogen decarboxylase (355 aa).

Substrate contacts are provided by residues 27–31, F46, D78, Y155, S210, and H328; that span reads RQAGR.

The protein belongs to the uroporphyrinogen decarboxylase family. Homodimer.

The protein localises to the cytoplasm. The catalysed reaction is uroporphyrinogen III + 4 H(+) = coproporphyrinogen III + 4 CO2. It functions in the pathway porphyrin-containing compound metabolism; protoporphyrin-IX biosynthesis; coproporphyrinogen-III from 5-aminolevulinate: step 4/4. In terms of biological role, catalyzes the decarboxylation of four acetate groups of uroporphyrinogen-III to yield coproporphyrinogen-III. The polypeptide is Uroporphyrinogen decarboxylase (Pseudomonas aeruginosa (strain ATCC 15692 / DSM 22644 / CIP 104116 / JCM 14847 / LMG 12228 / 1C / PRS 101 / PAO1)).